Consider the following 651-residue polypeptide: p-hydroxybenzoic acid efflux pump subunit AaeB (651 aa).

A run of 11 helical transmembrane segments spans residues Phe11–Leu31, Ala41–Ile61, Leu67–Ile87, Val91–Val111, Phe119–Leu139, Glu150–Ile170, Leu368–Val388, Phe405–Pro425, Gln429–Val449, Gly455–Phe475, and Leu481–Ile501.

It belongs to the aromatic acid exporter ArAE (TC 2.A.85) family.

The protein localises to the cell inner membrane. In terms of biological role, forms an efflux pump with AaeA. Could function as a metabolic relief valve, allowing to eliminate certain compounds when they accumulate to high levels in the cell. The protein is p-hydroxybenzoic acid efflux pump subunit AaeB of Yersinia pseudotuberculosis serotype O:1b (strain IP 31758).